The following is a 172-amino-acid chain: MDLKSKIRQIEGFPKEGISFKDITTVLKEGEALQYVTDQLTEQLKDLNIDIIVGPEARGFLVGTPVAYKLGVGFVPVRKPGKLPAETLTYEYELEYGTDSLQIHKDSIRPGQRVAIVDDLLATGGTVLATAKMVEALGGQVVSMNFLIELTGLKGRDILKGYEIKSLVEYEF.

The protein belongs to the purine/pyrimidine phosphoribosyltransferase family. As to quaternary structure, homodimer.

It is found in the cytoplasm. It catalyses the reaction AMP + diphosphate = 5-phospho-alpha-D-ribose 1-diphosphate + adenine. Its pathway is purine metabolism; AMP biosynthesis via salvage pathway; AMP from adenine: step 1/1. Its function is as follows. Catalyzes a salvage reaction resulting in the formation of AMP, that is energically less costly than de novo synthesis. In Alkaliphilus oremlandii (strain OhILAs) (Clostridium oremlandii (strain OhILAs)), this protein is Adenine phosphoribosyltransferase.